The sequence spans 208 residues: Phosphoheptose isomerase (208 aa).

The SIS domain maps to 38-200 (MAVTLAKGHK…LFENVLALQP (163 aa)). 53–55 (NGG) serves as a coordination point for substrate. 2 residues coordinate Zn(2+): His62 and Glu66. Residues Glu66, 95-96 (ND), 121-123 (STS), Ser126, and Gln173 contribute to the substrate site. Zn(2+) is bound by residues Gln173 and His181.

This sequence belongs to the SIS family. GmhA subfamily. In terms of assembly, homotetramer. It depends on Zn(2+) as a cofactor.

The protein resides in the cytoplasm. The catalysed reaction is 2 D-sedoheptulose 7-phosphate = D-glycero-alpha-D-manno-heptose 7-phosphate + D-glycero-beta-D-manno-heptose 7-phosphate. It functions in the pathway carbohydrate biosynthesis; D-glycero-D-manno-heptose 7-phosphate biosynthesis; D-glycero-alpha-D-manno-heptose 7-phosphate and D-glycero-beta-D-manno-heptose 7-phosphate from sedoheptulose 7-phosphate: step 1/1. Its function is as follows. Catalyzes the isomerization of sedoheptulose 7-phosphate in D-glycero-D-manno-heptose 7-phosphate. The chain is Phosphoheptose isomerase from Nitratidesulfovibrio vulgaris (strain ATCC 29579 / DSM 644 / CCUG 34227 / NCIMB 8303 / VKM B-1760 / Hildenborough) (Desulfovibrio vulgaris).